Consider the following 1102-residue polypeptide: Carbamoyl phosphate synthase large chain (1102 aa).

The interval 1–408 (MPKRSDIQSV…ALQKALRSLE (408 aa)) is carboxyphosphate synthetic domain. The ATP site is built by R129, R175, G181, G182, E214, I216, E221, G247, V248, H249, Q291, and E305. The 198-residue stretch at 137–334 (EAVKEKIGYG…IAKIAAKLAV (198 aa)) folds into the ATP-grasp 1 domain. Mg(2+) contacts are provided by Q291, E305, and N307. Q291, E305, and N307 together coordinate Mn(2+). The oligomerization domain stretch occupies residues 409 to 551 (KKGSQFAFTG…YFYSSYDEES (143 aa)). Residues 552 to 954 (EVAPRTKPAV…AYAKSQAGAY (403 aa)) are carbamoyl phosphate synthetic domain. One can recognise an ATP-grasp 2 domain in the interval 682-873 (GRVLAEAGLP…LAKAAARISL (192 aa)). Positions 718, 757, 759, 764, 789, 790, 791, 792, 832, and 844 each coordinate ATP. Q832, E844, and N846 together coordinate Mg(2+). Mn(2+)-binding residues include Q832, E844, and N846. An MGS-like domain is found at 955–1100 (GPLPTAGRAF…QEHAEHLTAA (146 aa)). The tract at residues 955-1102 (GPLPTAGRAF…HAEHLTAARD (148 aa)) is allosteric domain.

Belongs to the CarB family. Composed of two chains; the small (or glutamine) chain promotes the hydrolysis of glutamine to ammonia, which is used by the large (or ammonia) chain to synthesize carbamoyl phosphate. Tetramer of heterodimers (alpha,beta)4. Mg(2+) serves as cofactor. The cofactor is Mn(2+).

The enzyme catalyses hydrogencarbonate + L-glutamine + 2 ATP + H2O = carbamoyl phosphate + L-glutamate + 2 ADP + phosphate + 2 H(+). It catalyses the reaction hydrogencarbonate + NH4(+) + 2 ATP = carbamoyl phosphate + 2 ADP + phosphate + 2 H(+). It participates in amino-acid biosynthesis; L-arginine biosynthesis; carbamoyl phosphate from bicarbonate: step 1/1. It functions in the pathway pyrimidine metabolism; UMP biosynthesis via de novo pathway; (S)-dihydroorotate from bicarbonate: step 1/3. Large subunit of the glutamine-dependent carbamoyl phosphate synthetase (CPSase). CPSase catalyzes the formation of carbamoyl phosphate from the ammonia moiety of glutamine, carbonate, and phosphate donated by ATP, constituting the first step of 2 biosynthetic pathways, one leading to arginine and/or urea and the other to pyrimidine nucleotides. The large subunit (synthetase) binds the substrates ammonia (free or transferred from glutamine from the small subunit), hydrogencarbonate and ATP and carries out an ATP-coupled ligase reaction, activating hydrogencarbonate by forming carboxy phosphate which reacts with ammonia to form carbamoyl phosphate. The polypeptide is Carbamoyl phosphate synthase large chain (Streptomyces griseus subsp. griseus (strain JCM 4626 / CBS 651.72 / NBRC 13350 / KCC S-0626 / ISP 5235)).